Consider the following 287-residue polypeptide: Glutamate racemase (287 aa).

The span at 1–15 (MATKPQDANTTSREA) shows a compositional bias: polar residues. The segment at 1 to 25 (MATKPQDANTTSREAITSKADSPPR) is disordered. Substrate is bound by residues 32 to 33 (DS) and 64 to 65 (YG). The Proton donor/acceptor role is filled by Cys-96. Substrate is bound at residue 97 to 98 (NT). The active-site Proton donor/acceptor is Cys-208. Residue 209–210 (TH) participates in substrate binding.

This sequence belongs to the aspartate/glutamate racemases family.

It carries out the reaction L-glutamate = D-glutamate. Its pathway is cell wall biogenesis; peptidoglycan biosynthesis. Provides the (R)-glutamate required for cell wall biosynthesis. The protein is Glutamate racemase of Yersinia pseudotuberculosis serotype I (strain IP32953).